The chain runs to 369 residues: MEGEKGSKTRKGDALAREKLLEIAEKIYNQFEEEVVPSVSLPSRTKANLEYSDESDVWVYGDRESERSAKTVKGAFQLLKTTYATDFLINEHLARNRGSTLRELYYISEGWDYAKFKEQGESDRLIEDLEILTSLQREYFHMRPEEDGATMFGPIEITEQTKRGERNIHCQKDVGEGGYQIPFNVENIEFQKHDASMIIAIETGGMYARLMENGFDEAYNAILVHLKGQPARSTRRIIKRMNEELGIPVAVFTDGDPWSYRIYASVAYGAIKSAHLSEFMATPAAKFLGLQPSDIVEYELSTDKLTEQDVSALRSELSDPRFESDYWKEQIQLQLDIGKKAEQQAFAGKGLDFVTEVYLPNRLKEMGMI.

Residues 11–149 (KGDALAREKL…FHMRPEEDGA (139 aa)) form the Topo IIA-type catalytic domain. The active-site O-(5'-phospho-DNA)-tyrosine intermediate is Tyr-106. Positions 202 and 254 each coordinate Mg(2+).

Belongs to the TOP6A family. In terms of assembly, homodimer. Heterotetramer of two Top6A and two Top6B chains. The cofactor is Mg(2+).

It carries out the reaction ATP-dependent breakage, passage and rejoining of double-stranded DNA.. Its function is as follows. Relaxes both positive and negative superturns and exhibits a strong decatenase activity. This Methanosarcina mazei (strain ATCC BAA-159 / DSM 3647 / Goe1 / Go1 / JCM 11833 / OCM 88) (Methanosarcina frisia) protein is Type 2 DNA topoisomerase 6 subunit A.